We begin with the raw amino-acid sequence, 770 residues long: Amyloid-beta precursor protein (770 aa).

The N-terminal stretch at 1 to 17 is a signal peptide; the sequence is MLPSLALLLLAAWTVRA. The Extracellular portion of the chain corresponds to 18–701; it reads LEVPTDGNAG…AEDVGSNKGA (684 aa). A GFLD subdomain region spans residues 28–123; sequence LLAEPQIAMF…PYRCLVGEFV (96 aa). Residues 28–189 enclose the E1 domain; it reads LLAEPQIAMF…RGVEFVCCPL (162 aa). Disulfide bonds link Cys-38-Cys-62, Cys-73-Cys-117, Cys-98-Cys-105, Cys-133-Cys-187, Cys-144-Cys-174, and Cys-158-Cys-186. 96 to 110 serves as a coordination point for heparin; sequence NWCKRGRKQCKTHTH. The segment at 131–189 is cuBD subdomain; it reads DKCKFLHQERMDVCETHLHWHTVAKETCSEKSTNLHDYGMLLPCGIDKFRGVEFVCCPL. The interval 135–155 is copper-binding; that stretch reads FLHQERMDVCETHLHWHTVAK. Cu(2+)-binding residues include His-147, His-151, and Tyr-168. Positions 181 to 188 are zinc-binding; that stretch reads GVEFVCCP. Glu-183, Cys-186, and Cys-187 together coordinate Zn(2+). Residues 196–207 show a composition bias toward acidic residues; sequence IDSADAEEDDSD. The segment at 196 to 283 is disordered; that stretch reads IDSADAEEDD…TTTTTTTESV (88 aa). Ser-198 is modified (phosphoserine; by CK2). Position 206 is a phosphoserine; by CK1 (Ser-206). Sulfotyrosine is present on residues Tyr-217 and Tyr-262. The segment covering 228 to 264 has biased composition (acidic residues); it reads VAEEEEVADVEEEEAEDDEDVEDGDEVEEEAEEPYEE. Residues 268–281 are compositionally biased toward low complexity; sequence RTTSIATTTTTTTE. Cystine bridges form between Cys-291/Cys-341, Cys-300/Cys-324, and Cys-316/Cys-337. One can recognise a BPTI/Kunitz inhibitor domain in the interval 291 to 341; the sequence is CSEQAETGPCRAMISRWYFDVTEGKCAPFFYGGCGGNRNNFDTEEYCMAVC. The residue at position 336 (Tyr-336) is a Sulfotyrosine. The short motif at 344 to 365 is the OX-2 element; it reads VSSQSLLKTTSEPLPQDPVKLP. Positions 374 to 565 constitute an E2 domain; that stretch reads AVDKYLETPG…EEIQDEVDEL (192 aa). Residues 391 to 423 are heparin-binding; it reads FQKAKERLEAKHRERMSQVMREWEEAERQAKNL. Ser-441 carries the phosphoserine modification. Positions 491-522 are heparin-binding; sequence FNMLKKYVRAEQKDRQHTLKHFEHVRMVDPKK. Tyr-497 is subject to Phosphotyrosine. A collagen-binding region spans residues 523-540; sequence AAQIRSQVMTHLRVIYER. N-linked (GlcNAc...) asparagine glycans are attached at residues Asn-542 and Asn-571. An O-linked (Xyl...) (chondroitin sulfate) serine; in L-APP isoforms glycan is attached at Ser-656. Cu(2+) contacts are provided by His-677 and His-685. Zn(2+) contacts are provided by His-677 and His-685. Residues 695–722 form an interaction with PSEN1 region; the sequence is VGSNKGAIIGLMVGGVVIATVIVITLVM. Residues 702–722 form a helical membrane-spanning segment; that stretch reads IIGLMVGGVVIATVIVITLVM. Residues 723-770 are Cytoplasmic-facing; the sequence is LKKKQYTSIHHGVVEVDAAVTPEERHLSKMQQNGYENPTYKFFEQMQN. The Basolateral sorting signal motif lies at 724-734; the sequence is KKKQYTSIHHG. Residue Thr-729 is modified to Phosphothreonine. Phosphoserine; by APP-kinase I is present on Ser-730. The interaction with G(o)-alpha stretch occupies residues 732 to 751; that stretch reads HHGVVEVDAAVTPEERHLSK. A Phosphothreonine; by CDK5 and MAPK10 modification is found at Thr-743. A required for the interaction with KIF5B and for anterograde transport in axons region spans residues 756–770; sequence GYENPTYKFFEQMQN. Tyr-757 carries the post-translational modification Phosphotyrosine; by ABL1. The short motif at 757–762 is the YENPXY motif; contains endocytosis signal element; that stretch reads YENPTY. Residue Lys-763 forms a Glycyl lysine isopeptide (Lys-Gly) (interchain with G-Cter in ubiquitin) linkage.

The protein belongs to the APP family. Binds, via its C-terminus, to the PID domain of several cytoplasmic proteins, including APBB family members, the APBA family, MAPK8IP1, SHC1 and NUMB and DAB1. Binding to DAB1 inhibits its serine phosphorylation. Interacts (via NPXY motif) with DAB2 (via PID domain); the interaction is impaired by tyrosine phosphorylation of the NPXY motif. Also interacts with GPCR-like protein BPP, APPBP1, IB1, KNS2 (via its TPR domains), APPBP2 (via BaSS) and DDB1. In vitro, it binds MAPT via the MT-binding domains. Associates with microtubules in the presence of ATP and in a kinesin-dependent manner. Interacts, through a C-terminal domain, with GNAO1. Amyloid-beta protein 42 binds CHRNA7 in hippocampal neurons. Amyloid-beta associates with HADH2. Interacts with CPEB1, ANKS1B and AGER. Interacts with ITM2B. Interacts with ITM2C. Interacts with IDE. Can form homodimers; dimerization is enhanced in the presence of Cu(2+) ions. Can form homodimers; this is promoted by heparin binding. Amyloid-beta protein 40 interacts with S100A9. CTF-alpha product of APP interacts with GSAP. Isoform APP695 interacts with SORL1 (via N-terminal ectodomain); this interaction retains APP in the trans-Golgi network and reduces processing into soluble APP-alpha and amyloid-beta peptides. The C99 fragment also interacts with SORL1. Isoform APP751 interacts with SORL1. Isoform APP770 interacts with SORL1. Interacts with PLD3. Interacts with VDAC1. Interacts with NSG1; could regulate APP processing. Amyloid-beta protein 42 interacts with FPR2. Interacts with SYT7. Interacts (via transmembrane region) with PSEN1; the interaction is direct. Interacts with LRRK2. Interacts (via cytoplasmic domain) with KIF5B. Interacts (via C-terminus) with APBB2/FE65L1 (via C-terminus). Interacts (via intracellular domain) with APBB3. Post-translationally, proteolytically processed under normal cellular conditions. Cleavage either by alpha-secretase, beta-secretase or theta-secretase leads to generation and extracellular release of soluble APP peptides, S-APP-alpha and S-APP-beta, and the retention of corresponding membrane-anchored C-terminal fragments, C80, C83 and C99. Subsequent processing of C80 and C83 by gamma-secretase yields P3 peptides. This is the major secretory pathway and is non-amyloidogenic. Alternatively, presenilin/nicastrin-mediated gamma-secretase processing of C99 releases the amyloid-beta proteins, amyloid-beta protein 40 and amyloid-beta protein 42, major components of amyloid plaques, and the cytotoxic C-terminal fragments, gamma-CTF(50), gamma-CTF(57) and gamma-CTF(59). PSEN1 cleavage is more efficient with C83 than with C99 as substrate (in vitro). Amyloid-beta protein 40 and Amyloid-beta protein 42 are cleaved by ACE. Many other minor amyloid-beta peptides, amyloid-beta 1-X peptides, are found in cerebral spinal fluid (CSF) including the amyloid-beta X-15 peptides, produced from the cleavage by alpha-secretase. In terms of processing, proteolytically cleaved by caspases during neuronal apoptosis. Cleavage at Asp-739 by either caspase-3, -8 or -9 results in the production of the neurotoxic C31 peptide and the increased production of amyloid-beta peptides. N-glycosylated. Post-translationally, O-glycosylated. O-linkage of chondroitin sulfate to the L-APP isoforms produces the APP proteoglycan core proteins, the appicans. The chondroitin sulfate chain of appicans contains 4-O-sulfated galactose in the linkage region and chondroitin sulfate E in the repeated disaccharide region. In terms of processing, phosphorylation in the C-terminal on tyrosine, threonine and serine residues is neuron-specific. Phosphorylation can affect APP processing, neuronal differentiation and interaction with other proteins. Phosphorylated on Thr-743 in neuronal cells by Cdc5 kinase and Mapk10, in dividing cells by Cdc2 kinase in a cell-cycle dependent manner with maximal levels at the G2/M phase and, in vitro, by GSK-3-beta. The Thr-743 phosphorylated form causes a conformational change which reduces binding of Fe65 family members. In dopaminergic (DA) neurons, phosphorylation on Thr-743 by LRKK2 promotes the production and the nuclear translocation of the APP intracellular domain (AICD) which induces DA neuron apoptosis. Phosphorylation on Tyr-757 is required for SHC binding. Phosphorylated in the extracellular domain by casein kinases on both soluble and membrane-bound APP. This phosphorylation is inhibited by heparin. Extracellular binding and reduction of copper, results in a corresponding oxidation of Cys-144 and Cys-158, and the formation of a disulfide bond. Post-translationally, trophic-factor deprivation triggers the cleavage of surface APP by beta-secretase to release sAPP-beta which is further cleaved to release an N-terminal fragment of APP (N-APP). In terms of processing, amyloid-beta peptides are degraded by IDE. Sulfated on tyrosine residues. As to expression, expressed in the brain. In the brain, non-L-APP isoforms are expressed in neurons, isoform APP695 being the predominant form. In astrocytes and microglial cells, almost 50% is L-isoform (appican).

It is found in the cell membrane. It localises to the membrane. The protein localises to the perikaryon. Its subcellular location is the cell projection. The protein resides in the growth cone. It is found in the clathrin-coated pit. It localises to the early endosome. The protein localises to the cytoplasmic vesicle. Its subcellular location is the endoplasmic reticulum. The protein resides in the golgi apparatus. It is found in the cell surface. It localises to the nucleus. The protein localises to the cytoplasm. Its subcellular location is the secreted. Functionally, functions as a cell surface receptor and performs physiological functions on the surface of neurons relevant to neurite growth, neuronal adhesion and axonogenesis. Interaction between APP molecules on neighboring cells promotes synaptogenesis. Involved in cell mobility and transcription regulation through protein-protein interactions. Can promote transcription activation through binding to APBB1-KAT5 and inhibit Notch signaling through interaction with Numb. Couples to apoptosis-inducing pathways such as those mediated by G(o) and JIP. Inhibits G(o)-alpha ATPase activity. Acts as a kinesin I membrane receptor, mediating the axonal transport of beta-secretase and presenilin 1. By acting as a kinesin I membrane receptor, plays a role in axonal anterograde transport of cargo towards synapses in axons. May be involved in copper homeostasis/oxidative stress through copper ion reduction. Can regulate neurite outgrowth through binding to components of the extracellular matrix such as heparin and collagen I and IV. The splice isoforms that contain the BPTI domain possess protease inhibitor activity. Induces a AGER-dependent pathway that involves activation of p38 MAPK, resulting in internalization of amyloid-beta peptide and leading to mitochondrial dysfunction in cultured mitochondrial dysfunction in cultured cortical neurons. Provides Cu(2+) ions for GPC1 which are required for release of nitric oxide (NO) and subsequent degradation of the heparan sulfate chains on GPC1. In terms of biological role, amyloid-beta peptides are lipophilic metal chelators with metal-reducing activity. Binds transient metals such as copper, zinc and iron. Rat and mouse amyloid-beta peptides bind only weakly transient metals and have little reducing activity due to substitutions of transient metal chelating residues. Amyloid-beta protein 42 may activate mononuclear phagocytes in the brain and elicits inflammatory responses. Promotes both tau aggregation and TPK II-mediated phosphorylation. Also binds GPC1 in lipid rafts. Appicans elicit adhesion of neural cells to the extracellular matrix and may regulate neurite outgrowth in the brain. Its function is as follows. The gamma-CTF peptides as well as the caspase-cleaved peptides, including C31, are potent enhancers of neuronal apoptosis. This chain is Amyloid-beta precursor protein, found in Rattus norvegicus (Rat).